Here is a 282-residue protein sequence, read N- to C-terminus: Putative SWIB domain-containing protein 070L (282 aa).

A compositionally biased stretch (low complexity) spans 1–16; the sequence is MFQTTPKQVKPTTVPK. Positions 1-21 are disordered; it reads MFQTTPKQVKPTTVPKTGRKN. The 85-residue stretch at 97–181 folds into the SWIB/MDM2 domain; sequence GLEKPRMISE…QKYLKHCFDE (85 aa). The interval 199–282 is disordered; that stretch reads TDDQTTAEEA…KVKKEHKIKK (84 aa). Basic and acidic residues predominate over residues 262-275; it reads GKKDKENIPLEKVK.

The protein belongs to the IIV-6 306R family.

This Invertebrate iridescent virus 3 (IIV-3) protein is Putative SWIB domain-containing protein 070L.